The sequence spans 234 residues: LexA repressor (234 aa).

Residues 26-46 (FDEMKTALELTSKSGIHRLIT) constitute a DNA-binding region (H-T-H motif). Catalysis depends on for autocatalytic cleavage activity residues Ser155 and Lys193.

The protein belongs to the peptidase S24 family. As to quaternary structure, homodimer.

It catalyses the reaction Hydrolysis of Ala-|-Gly bond in repressor LexA.. In terms of biological role, represses a number of genes involved in the response to DNA damage (SOS response), including recA and lexA. In the presence of single-stranded DNA, RecA interacts with LexA causing an autocatalytic cleavage which disrupts the DNA-binding part of LexA, leading to derepression of the SOS regulon and eventually DNA repair. In Bartonella henselae (strain ATCC 49882 / DSM 28221 / CCUG 30454 / Houston 1) (Rochalimaea henselae), this protein is LexA repressor.